The chain runs to 73 residues: Large ribosomal subunit protein uL29 (73 aa).

It belongs to the universal ribosomal protein uL29 family.

The protein is Large ribosomal subunit protein uL29 (rpmC) of Synechocystis sp. (strain ATCC 27184 / PCC 6803 / Kazusa).